The chain runs to 55 residues: ATP synthase F(0) complex subunit 8 (55 aa).

Residues 4 to 24 traverse the membrane as a helical segment; sequence LNPSPWFIILLFSWVIFMVIL.

The protein belongs to the ATPase protein 8 family. Component of the ATP synthase complex composed at least of ATP5F1A/subunit alpha, ATP5F1B/subunit beta, ATP5MC1/subunit c (homooctomer), MT-ATP6/subunit a, MT-ATP8/subunit 8, ATP5ME/subunit e, ATP5MF/subunit f, ATP5MG/subunit g, ATP5MK/subunit k, ATP5MJ/subunit j, ATP5F1C/subunit gamma, ATP5F1D/subunit delta, ATP5F1E/subunit epsilon, ATP5PF/subunit F6, ATP5PB/subunit b, ATP5PD/subunit d, ATP5PO/subunit OSCP. ATP synthase complex consists of a soluble F(1) head domain (subunits alpha(3) and beta(3)) - the catalytic core - and a membrane F(0) domain - the membrane proton channel (subunits c, a, 8, e, f, g, k and j). These two domains are linked by a central stalk (subunits gamma, delta, and epsilon) rotating inside the F1 region and a stationary peripheral stalk (subunits F6, b, d, and OSCP).

It localises to the mitochondrion membrane. In terms of biological role, subunit 8, of the mitochondrial membrane ATP synthase complex (F(1)F(0) ATP synthase or Complex V) that produces ATP from ADP in the presence of a proton gradient across the membrane which is generated by electron transport complexes of the respiratory chain. ATP synthase complex consist of a soluble F(1) head domain - the catalytic core - and a membrane F(1) domain - the membrane proton channel. These two domains are linked by a central stalk rotating inside the F(1) region and a stationary peripheral stalk. During catalysis, ATP synthesis in the catalytic domain of F(1) is coupled via a rotary mechanism of the central stalk subunits to proton translocation. In vivo, can only synthesize ATP although its ATP hydrolase activity can be activated artificially in vitro. Part of the complex F(0) domain. This Scyliorhinus canicula (Small-spotted catshark) protein is ATP synthase F(0) complex subunit 8.